We begin with the raw amino-acid sequence, 167 residues long: Large ribosomal subunit protein uL10 (167 aa).

It belongs to the universal ribosomal protein uL10 family. In terms of assembly, part of the ribosomal stalk of the 50S ribosomal subunit. The N-terminus interacts with L11 and the large rRNA to form the base of the stalk. The C-terminus forms an elongated spine to which L12 dimers bind in a sequential fashion forming a multimeric L10(L12)X complex.

Forms part of the ribosomal stalk, playing a central role in the interaction of the ribosome with GTP-bound translation factors. This chain is Large ribosomal subunit protein uL10, found in Cytophaga hutchinsonii (strain ATCC 33406 / DSM 1761 / CIP 103989 / NBRC 15051 / NCIMB 9469 / D465).